Consider the following 297-residue polypeptide: MDQNNSIPPFQGLASPQGSLTPGINIFSPLMPYGTGLTPQPVQTTNSLSILEEQQRQQQQAQQSTSQQGNQGSGQTPQLFHPQTLTTAPLPGNTPLYPSPMTPMTPITPATPASESSGIVPQLQNIVSTVNLGCKLDLKTIALRARNAEYNPKRFAAVIMRIREPRTTALIFSSGKMVCTGAKSEEQSRLAARKYARVVQKLGFPAKFLDFKIQNMVGSCDVKFPIRLEGLVLTHQQFSSYEPELFPGLIYRMIKPRIVLLIFVSGKVVLTGAKVRAEIYEAFENIYPILKGFRKTT.

Positions 52 to 116 (EEQQRQQQQA…ITPATPASES (65 aa)) are disordered. Low complexity-rich tracts occupy residues 56 to 78 (RQQQQAQQSTSQQGNQGSGQTPQ) and 104 to 114 (MTPITPATPAS). 2 tandem repeats follow at residues 123–199 (LQNI…ARVV) and 213–290 (IQNM…YPIL).

It belongs to the TBP family. As to quaternary structure, belongs to the TFIID complex together with the TBP-associated factors (TAFs). Binds DNA as monomer. The N-terminal domain is extensively phosphorylated.

The protein localises to the nucleus. In terms of biological role, general transcription factor that functions at the core of the DNA-binding multiprotein factor TFIID. Binding of TFIID to the TATA box is the initial transcriptional step of the pre-initiation complex (PIC), playing a role in the activation of eukaryotic genes transcribed by RNA polymerase II. Members of the TBP family are differentially required to regulate transcription and development during early embryogenesis. Binds to the promoters of select genes. This is TATA-box-binding protein from Xenopus tropicalis (Western clawed frog).